The following is an 871-amino-acid chain: DNA mismatch repair protein MutS (871 aa).

ATP is bound at residue 625 to 632; the sequence is GPNMAGKS.

It belongs to the DNA mismatch repair MutS family.

This protein is involved in the repair of mismatches in DNA. It is possible that it carries out the mismatch recognition step. This protein has a weak ATPase activity. This chain is DNA mismatch repair protein MutS, found in Chlorobium limicola (strain DSM 245 / NBRC 103803 / 6330).